The chain runs to 99 residues: Malonate decarboxylase acyl carrier protein (99 aa).

Residue S25 is modified to O-(phosphoribosyl dephospho-coenzyme A)serine.

Belongs to the MdcC family. Covalently binds the prosthetic group of malonate decarboxylase.

It is found in the cytoplasm. Its function is as follows. Subunit of malonate decarboxylase, it is an acyl carrier protein to which acetyl and malonyl thioester residues are bound via a 2'-(5''-phosphoribosyl)-3'-dephospho-CoA prosthetic group and turn over during the catalytic mechanism. This is Malonate decarboxylase acyl carrier protein from Stutzerimonas stutzeri (strain A1501) (Pseudomonas stutzeri).